We begin with the raw amino-acid sequence, 145 residues long: Large ribosomal subunit protein uL11 (145 aa).

It belongs to the universal ribosomal protein uL11 family. In terms of assembly, part of the ribosomal stalk of the 50S ribosomal subunit. Interacts with L10 and the large rRNA to form the base of the stalk. L10 forms an elongated spine to which L12 dimers bind in a sequential fashion forming a multimeric L10(L12)X complex. One or more lysine residues are methylated.

Its function is as follows. Forms part of the ribosomal stalk which helps the ribosome interact with GTP-bound translation factors. In Francisella philomiragia subsp. philomiragia (strain ATCC 25017 / CCUG 19701 / FSC 153 / O#319-036), this protein is Large ribosomal subunit protein uL11.